The chain runs to 370 residues: N-acyl-L-amino acid amidohydrolase (370 aa).

It belongs to the peptidase M20 family. As to quaternary structure, homotetramer. The cofactor is Co(2+).

The catalysed reaction is an N-acyl-L-amino acid + H2O = an L-alpha-amino acid + a carboxylate. The enzyme catalyses an N-acetyl-L-cysteine-S-conjugate + H2O = an S-substituted L-cysteine + acetate. Hydrolyzes most efficiently N-acetyl derivatives of aromatic amino acids but is also active on other amino acids. L-stereospecific. In Geobacillus stearothermophilus (Bacillus stearothermophilus), this protein is N-acyl-L-amino acid amidohydrolase (amaA).